The chain runs to 229 residues: GTP cyclohydrolase 1 (229 aa).

A disordered region spans residues 1–26 (MDAKIKPIRGTNPAEGRPEFQPAELE). 3 residues coordinate Zn(2+): Cys118, His121, and Cys189.

It belongs to the GTP cyclohydrolase I family. Toroid-shaped homodecamer, composed of two pentamers of five dimers.

The enzyme catalyses GTP + H2O = 7,8-dihydroneopterin 3'-triphosphate + formate + H(+). Its pathway is cofactor biosynthesis; 7,8-dihydroneopterin triphosphate biosynthesis; 7,8-dihydroneopterin triphosphate from GTP: step 1/1. The protein is GTP cyclohydrolase 1 of Rhodopseudomonas palustris (strain ATCC BAA-98 / CGA009).